A 289-amino-acid polypeptide reads, in one-letter code: MTTSPTAPVALVTGAAKRLGSSIAEALHAEGYTVCLHYHRSAADASTLAATLNARRPNSAITVQADLSNVATASFSETDGSVPVTLFSRCSALVDACYMHWGRCDVLVNNASSFYPTPLLRKDAGEGGSSVGDKESLEVAAADLFGSNAIAPYFLIKAFAQRVADTRAEQRGTSYSIVNMVDAMTSQPLLGYTMYTMAKEALEGLTRSAALELASLQIRVNGVSPGLSVLPDDMPFSVQEDYRRKVPLYQRNSSAEEVSDVVIFLCSPKAKYITGTCIKVDGGYSLTRA.

14–41 (GAAKRLGSSIAEALHAEGYTVCLHYHRS) is a binding site for NADP(+). Residue S176 participates in substrate binding. Y195 acts as the Proton acceptor in catalysis. 195–199 (YTMAK) contacts NADP(+).

The protein belongs to the short-chain dehydrogenases/reductases (SDR) family. In terms of assembly, homotetramer.

It catalyses the reaction (6R)-L-erythro-5,6,7,8-tetrahydrobiopterin + 2 NADP(+) = L-erythro-biopterin + 2 NADPH + 2 H(+). The protein operates within cofactor biosynthesis; tetrahydrobiopterin biosynthesis; tetrahydrobiopterin from biopterin: step 1/1. In terms of biological role, exhibits a NADPH-dependent biopterin reductase activity. Has good activity with folate and significant activity with dihydrofolate and dihydrobiopterin, but not with quinonoid dihydrobiopterin. Confers resistance to methotrexate (MTX). The polypeptide is Pteridine reductase 1 (PTR1) (Leishmania tarentolae (Sauroleishmania tarentolae)).